Reading from the N-terminus, the 154-residue chain is Myoglobin (154 aa).

The region spanning 2–148 (GLSDGEWQLV…FRNDMAAKYK (147 aa)) is the Globin domain. Serine 4 carries the phosphoserine modification. Histidine 65 contributes to the nitrite binding site. Histidine 65 lines the O2 pocket. The residue at position 68 (threonine 68) is a Phosphothreonine. Position 94 (histidine 94) interacts with heme b.

This sequence belongs to the globin family. As to quaternary structure, monomeric.

The protein resides in the cytoplasm. It localises to the sarcoplasm. It carries out the reaction Fe(III)-heme b-[protein] + nitric oxide + H2O = Fe(II)-heme b-[protein] + nitrite + 2 H(+). It catalyses the reaction H2O2 + AH2 = A + 2 H2O. In terms of biological role, monomeric heme protein which primary function is to store oxygen and facilitate its diffusion within muscle tissues. Reversibly binds oxygen through a pentacoordinated heme iron and enables its timely and efficient release as needed during periods of heightened demand. Depending on the oxidative conditions of tissues and cells, and in addition to its ability to bind oxygen, it also has a nitrite reductase activity whereby it regulates the production of bioactive nitric oxide. Under stress conditions, like hypoxia and anoxia, it also protects cells against reactive oxygen species thanks to its pseudoperoxidase activity. This chain is Myoglobin (MB), found in Macaca fascicularis (Crab-eating macaque).